An 85-amino-acid polypeptide reads, in one-letter code: Arminin 6494 (85 aa).

The first 18 residues, M1–A18, serve as a signal peptide directing secretion. Positions R19–A57 are excised as a propeptide. The residue at position 82 (A82) is an Alanine amide.

It belongs to the arminin family. Expressed in entodermal epithelium along the body column.

The protein resides in the secreted. The protein localises to the target cell membrane. Antimicrobial peptide with a broad-spectrum antimicrobial activity. Keeps its antibacterial activity under a wide range of salt concentrations that mimic physiological conditions of human blood, which is surprising, since Hydra is an obligate freshwater animal with nearly no salt tolerance. Does not affect red blood cells. The polypeptide is Arminin 6494 (Hydra vulgaris (Hydra)).